Reading from the N-terminus, the 509-residue chain is 2-isopropylmalate synthase (509 aa).

Residues 5–267 form the Pyruvate carboxyltransferase domain; the sequence is IQIFDTTLRD…QTALNLEETK (263 aa). Mn(2+)-binding residues include Asp14, His202, His204, and Asn238. Residues 391 to 509 form a regulatory domain region; sequence KLETLQLQYV…AAENVEKVGN (119 aa).

Belongs to the alpha-IPM synthase/homocitrate synthase family. LeuA type 1 subfamily. Homodimer. Requires Mn(2+) as cofactor.

It is found in the cytoplasm. It carries out the reaction 3-methyl-2-oxobutanoate + acetyl-CoA + H2O = (2S)-2-isopropylmalate + CoA + H(+). It participates in amino-acid biosynthesis; L-leucine biosynthesis; L-leucine from 3-methyl-2-oxobutanoate: step 1/4. Catalyzes the condensation of the acetyl group of acetyl-CoA with 3-methyl-2-oxobutanoate (2-ketoisovalerate) to form 3-carboxy-3-hydroxy-4-methylpentanoate (2-isopropylmalate). This chain is 2-isopropylmalate synthase, found in Staphylococcus aureus (strain bovine RF122 / ET3-1).